A 665-amino-acid polypeptide reads, in one-letter code: Intraflagellar transport protein 70A (665 aa).

7 TPR repeats span residues 11 to 44, 45 to 78, 154 to 187, 189 to 221, 393 to 424, 425 to 457, and 459 to 492; these read DGEFTALVYRLIRDARYAEAVQLLGRELQRSPRS, RAGLSLLGYCYYRLQEFALAAECYEQLGQLHPEL, TDGQVNLGCLLYKEGQYEAACSKFSATLQASGYQ, DLSYNLALAYYSSRQYASALKHIAEIIERGIRQ, LTKQVQEARHNRDDEAIKKAVNEYDETMEKYI, PVLMAQAKIYWNLENYPMVEKVFRKSVEFCNDH, and VWKLNVAHVLFMQENKYKEAIGFYEPIVKKHYDN. The stretch at 508–535 forms a coiled coil; it reads YIMTSQNEEAEELMRKIEKEEEQLSYDD. One copy of the TPR 8 repeat lies at 544 to 577; that stretch reads CIVNLVIGTLYCAKGNYEFGISRVIKSLEPYNKK.

It belongs to the TTC30/dfy-1/fleer family.

Its subcellular location is the cell projection. The protein localises to the cilium. Its function is as follows. Required for polyglutamylation of axonemal tubulin. Plays a role in anterograde intraflagellar transport (IFT), the process by which cilia precursors are transported from the base of the cilium to the site of their incorporation at the tip. In Homo sapiens (Human), this protein is Intraflagellar transport protein 70A.